Here is a 61-residue protein sequence, read N- to C-terminus: Small ribosomal subunit protein uS14 (61 aa).

Residues Cys24, Cys27, Cys40, and Cys43 each contribute to the Zn(2+) site.

Belongs to the universal ribosomal protein uS14 family. Zinc-binding uS14 subfamily. Part of the 30S ribosomal subunit. Contacts proteins S3 and S10. Zn(2+) is required as a cofactor.

Binds 16S rRNA, required for the assembly of 30S particles and may also be responsible for determining the conformation of the 16S rRNA at the A site. The protein is Small ribosomal subunit protein uS14 of Deinococcus geothermalis (strain DSM 11300 / CIP 105573 / AG-3a).